A 383-amino-acid polypeptide reads, in one-letter code: 3-phytase (383 aa).

The first 26 residues, 1–26 (MNHSKTLLLTAAAGLMLTCGAVSSQA), serve as a signal peptide directing secretion. Residues 27–30 (KHKL) constitute a propeptide that is removed on maturation. In terms of domain architecture, BPP spans 31 to 362 (SDPYHFTVNA…VPWERIADKI (332 aa)). Positions 364-383 (FHPQVNKQVDPRKMTDRSGK) are disordered. Positions 372-383 (VDPRKMTDRSGK) are enriched in basic and acidic residues.

It is found in the secreted. The catalysed reaction is 1D-myo-inositol hexakisphosphate + H2O = 1D-myo-inositol 1,2,4,5,6-pentakisphosphate + phosphate. This is 3-phytase (phy) from Bacillus sp. (strain DS11).